A 343-amino-acid chain; its full sequence is Large ribosomal subunit protein uL3 (343 aa).

2 disordered regions span residues 1 to 31 (MGHR…TPRS) and 238 to 262 (KGSR…PGQM).

It belongs to the universal ribosomal protein uL3 family. In terms of assembly, part of the 50S ribosomal subunit. Forms a cluster with proteins L14 and L24e.

In terms of biological role, one of the primary rRNA binding proteins, it binds directly near the 3'-end of the 23S rRNA, where it nucleates assembly of the 50S subunit. This chain is Large ribosomal subunit protein uL3, found in Sulfurisphaera tokodaii (strain DSM 16993 / JCM 10545 / NBRC 100140 / 7) (Sulfolobus tokodaii).